The following is a 171-amino-acid chain: MARSLVESEALQMGVRRLSSPLTSPVQAEVYFPRLTVPFCGHIKGGLRPGKKILIMGIVNLEPKSFDIRLTCGDSEDPAADIAIELRAEFADKQFLRNACVSGKWGEEESAIPYFPFIADQPFRVEIHCEHPQFRIIVDGHQLFDFYHRVESLSAINTIKINGDLQLTKLG.

Positions 38-170 (PFCGHIKGGL…INGDLQLTKL (133 aa)) constitute a Galectin domain.

In terms of biological role, does not bind lactose, and may not bind carbohydrates. The protein is Galectin-related protein A (lgalsl-a) of Xenopus laevis (African clawed frog).